The primary structure comprises 84 residues: MNYLVMISFALLLMTGVESVRDAYIAKPENCVYHCATNEGCNKLCTDNGAESGYCQWGGKYGNACWCIKLPDDVPIRVPGKCHR.

The signal sequence occupies residues 1–19 (MNYLVMISFALLLMTGVES). Residues 21-83 (RDAYIAKPEN…VPIRVPGKCH (63 aa)) enclose the LCN-type CS-alpha/beta domain. Disulfide bonds link C31–C82, C35–C55, C41–C65, and C45–C67. Position 84 (R84) is a propeptide, removed by a carboxypeptidase.

This sequence belongs to the long (4 C-C) scorpion toxin superfamily. Sodium channel inhibitor family. Alpha subfamily. In terms of tissue distribution, expressed by the venom gland.

The protein localises to the secreted. Alpha toxins bind voltage-independently at site-3 of sodium channels (Nav) and inhibit the inactivation of the activated channels, thereby blocking neuronal transmission. This recombinant toxin selectively inhibits the fast inactivation of mNav1.4/SCN4A (EC(50)=82.3 nM) (tested in HEK293 cells). In Olivierus martensii (Manchurian scorpion), this protein is Neurotoxin BmK-M11.